The chain runs to 124 residues: Small ribosomal subunit protein uS12c (124 aa).

Belongs to the universal ribosomal protein uS12 family. As to quaternary structure, part of the 30S ribosomal subunit.

It is found in the plastid. The protein resides in the chloroplast. In terms of biological role, with S4 and S5 plays an important role in translational accuracy. Located at the interface of the 30S and 50S subunits. This Ostreococcus tauri protein is Small ribosomal subunit protein uS12c (rps12).